The chain runs to 581 residues: Prolactin receptor (581 aa).

Residues 1-24 (MKENVASRAVFILLLFLNASLLNG) form the signal peptide. Residues 25–234 (QSPPGKPKII…QIPNDFPVND (210 aa)) lie on the Extracellular side of the membrane. 2 consecutive Fibronectin type-III domains span residues 27 to 127 (PPGK…IVEP) and 129 to 229 (PPAN…IPND). Cys-36 and Cys-46 are disulfide-bonded. A glycan (N-linked (GlcNAc...) asparagine) is linked at Asn-59. A disulfide bridge links Cys-75 with Cys-86. An N-linked (GlcNAc...) asparagine glycan is attached at Asn-132. Asp-211 and His-212 together coordinate Zn(2+). Positions 215 to 219 (WSEWS) match the WSXWS motif motif. N-linked (GlcNAc...) asparagine glycosylation is present at Asn-233. The chain crosses the membrane as a helical span at residues 235 to 258 (TTVWIFVAVLSAVICLIMVWAVAL). The Cytoplasmic segment spans residues 259 to 581 (KGYSMMTCIL…PAKEAPPALP (323 aa)). The short motif at 267-275 (ILPPVPGPK) is the Box 1 motif element. Disordered regions lie at residues 321–362 (EDQQ…LFSE) and 462–502 (LKPS…QDKT). The segment covering 329 to 349 (PSKEHMEQGVKPMHMDPDSDS) has biased composition (basic and acidic residues).

Belongs to the type I cytokine receptor family. Type 1 subfamily. As to quaternary structure, interacts with SMARCA1. Interacts with NEK3 and VAV2 and this interaction is prolactin-dependent.

The protein localises to the membrane. In terms of biological role, this is a receptor for the anterior pituitary hormone prolactin. This Cervus elaphus (Red deer) protein is Prolactin receptor (PRLR).